Reading from the N-terminus, the 394-residue chain is NADH dehydrogenase [ubiquinone] iron-sulfur protein 2 (394 aa).

This sequence belongs to the complex I 49 kDa subunit family. Complex I is composed of at least 49 different subunits. This is a component of the iron-sulfur (IP) fragment of the enzyme.

It localises to the mitochondrion. It catalyses the reaction a ubiquinone + NADH + 5 H(+)(in) = a ubiquinol + NAD(+) + 4 H(+)(out). Functionally, core subunit of the mitochondrial membrane respiratory chain NADH dehydrogenase (Complex I) that is believed to belong to the minimal assembly required for catalysis. Complex I functions in the transfer of electrons from NADH to the respiratory chain. The immediate electron acceptor for the enzyme is believed to be ubiquinone. Component of the iron-sulfur (IP) fragment of the enzyme. This Arabidopsis thaliana (Mouse-ear cress) protein is NADH dehydrogenase [ubiquinone] iron-sulfur protein 2 (NAD7).